A 156-amino-acid polypeptide reads, in one-letter code: Small ribosomal subunit protein uS7 (156 aa).

It belongs to the universal ribosomal protein uS7 family. In terms of assembly, part of the 30S ribosomal subunit. Contacts proteins S9 and S11.

Functionally, one of the primary rRNA binding proteins, it binds directly to 16S rRNA where it nucleates assembly of the head domain of the 30S subunit. Is located at the subunit interface close to the decoding center, probably blocks exit of the E-site tRNA. This chain is Small ribosomal subunit protein uS7, found in Haemophilus influenzae (strain 86-028NP).